A 153-amino-acid polypeptide reads, in one-letter code: UPF0756 membrane protein lwe1581 (153 aa).

4 helical membrane passes run 6 to 26 (MLFLLLFLLLGLIAKNNSLII), 54 to 74 (WGVTIITVAILIPIATGQIGF), 80 to 100 (SFKSAAGWIGLGAGIAVSILA), and 117 to 137 (LVFGTILAVVLFRGIAAGPVI).

It belongs to the UPF0756 family.

It is found in the cell membrane. The polypeptide is UPF0756 membrane protein lwe1581 (Listeria welshimeri serovar 6b (strain ATCC 35897 / DSM 20650 / CCUG 15529 / CIP 8149 / NCTC 11857 / SLCC 5334 / V8)).